Here is an 84-residue protein sequence, read N- to C-terminus: Omega-theraphotoxin-Pm1a (84 aa).

A signal peptide spans 1–21; sequence MKTSMLAVFVALPLAFVLTAA. The propeptide occupies 22–45; the sequence is TEERAHPNELVNSLVELVKLDAER. 3 disulfides stabilise this stretch: cysteine 52-cysteine 66, cysteine 59-cysteine 71, and cysteine 65-cysteine 78.

It belongs to the neurotoxin 10 (Hwtx-1) family. 41 (Jztx-36) subfamily. As to expression, expressed by the venom gland.

It is found in the secreted. Functionally, omega-conotoxins act at presynaptic membranes, they bind and block voltage-gated calcium channels (Cav). This toxin inhibits barium currents (IBa) mediated by L-type voltage-gated calcium channels Cav1.2/CACNA1C (IC(50)=825 nM) and Cav1.3/CACNA1C (IC(50)=2240 nM). This Pelinobius muticus (King baboon spider) protein is Omega-theraphotoxin-Pm1a.